We begin with the raw amino-acid sequence, 263 residues long: Endonuclease 8 (263 aa).

The Schiff-base intermediate with DNA role is filled by P2. E3 acts as the Proton donor in catalysis. The active-site Proton donor; for beta-elimination activity is K53. DNA contacts are provided by Q70, R125, and N169. Residues 229–263 (KVFHREGKACERCGGVIERSTLSSRPFYGCPVCQK) form an FPG-type zinc finger. R253 acts as the Proton donor; for delta-elimination activity in catalysis.

Belongs to the FPG family. Zn(2+) serves as cofactor.

The enzyme catalyses 2'-deoxyribonucleotide-(2'-deoxyribose 5'-phosphate)-2'-deoxyribonucleotide-DNA = a 3'-end 2'-deoxyribonucleotide-(2,3-dehydro-2,3-deoxyribose 5'-phosphate)-DNA + a 5'-end 5'-phospho-2'-deoxyribonucleoside-DNA + H(+). Involved in base excision repair of DNA damaged by oxidation or by mutagenic agents. Acts as a DNA glycosylase that recognizes and removes damaged bases. Has a preference for oxidized pyrimidines, such as thymine glycol, 5,6-dihydrouracil and 5,6-dihydrothymine. Has AP (apurinic/apyrimidinic) lyase activity and introduces nicks in the DNA strand. Cleaves the DNA backbone by beta-delta elimination to generate a single-strand break at the site of the removed base with both 3'- and 5'-phosphates. This Enterobacter sp. (strain 638) protein is Endonuclease 8.